A 202-amino-acid chain; its full sequence is Probable nicotinate-nucleotide adenylyltransferase (202 aa).

Belongs to the NadD family.

It catalyses the reaction nicotinate beta-D-ribonucleotide + ATP + H(+) = deamido-NAD(+) + diphosphate. Its pathway is cofactor biosynthesis; NAD(+) biosynthesis; deamido-NAD(+) from nicotinate D-ribonucleotide: step 1/1. Its function is as follows. Catalyzes the reversible adenylation of nicotinate mononucleotide (NaMN) to nicotinic acid adenine dinucleotide (NaAD). The polypeptide is Probable nicotinate-nucleotide adenylyltransferase (Clostridium perfringens (strain SM101 / Type A)).